Reading from the N-terminus, the 124-residue chain is Ribonuclease pancreatic (124 aa).

Residues lysine 1–methionine 13 show a composition bias toward basic and acidic residues. Residues lysine 1–serine 22 form a disordered region. Lysine 7 and arginine 10 together coordinate substrate. The active-site Proton acceptor is the histidine 12. Cystine bridges form between cysteine 26–cysteine 84, cysteine 40–cysteine 95, cysteine 58–cysteine 110, and cysteine 65–cysteine 72. The N-linked (GlcNAc...) asparagine glycan is linked to asparagine 34. Substrate-binding positions include lysine 41 to threonine 45, lysine 66, and arginine 85. Residue histidine 119 is the Proton donor of the active site.

It belongs to the pancreatic ribonuclease family. As to quaternary structure, monomer. Interacts with and forms tight 1:1 complexes with RNH1. Dimerization of two such complexes may occur. Interaction with RNH1 inhibits this protein. In terms of tissue distribution, pancreas.

Its subcellular location is the secreted. It catalyses the reaction an [RNA] containing cytidine + H2O = an [RNA]-3'-cytidine-3'-phosphate + a 5'-hydroxy-ribonucleotide-3'-[RNA].. The enzyme catalyses an [RNA] containing uridine + H2O = an [RNA]-3'-uridine-3'-phosphate + a 5'-hydroxy-ribonucleotide-3'-[RNA].. In terms of biological role, endonuclease that catalyzes the cleavage of RNA on the 3' side of pyrimidine nucleotides. Acts on single-stranded and double-stranded RNA. The chain is Ribonuclease pancreatic (RNASE1) from Bison bison (American bison).